The sequence spans 161 residues: Cyclic pyranopterin monophosphate synthase (161 aa).

Residues 75-77 (LCH) and 113-114 (ME) each bind substrate. Asp-128 is a catalytic residue.

The protein belongs to the MoaC family. Homohexamer; trimer of dimers.

The catalysed reaction is (8S)-3',8-cyclo-7,8-dihydroguanosine 5'-triphosphate = cyclic pyranopterin phosphate + diphosphate. It participates in cofactor biosynthesis; molybdopterin biosynthesis. Its function is as follows. Catalyzes the conversion of (8S)-3',8-cyclo-7,8-dihydroguanosine 5'-triphosphate to cyclic pyranopterin monophosphate (cPMP). The chain is Cyclic pyranopterin monophosphate synthase from Cronobacter sakazakii (strain ATCC BAA-894) (Enterobacter sakazakii).